The primary structure comprises 334 residues: Tryptophan--tRNA ligase (334 aa).

ATP-binding positions include 11 to 13 (QPS) and 19 to 20 (GN). Positions 12–20 (PSGELTIGN) match the 'HIGH' region motif. Position 135 (Asp-135) interacts with L-tryptophan. ATP contacts are provided by residues 147 to 149 (GED), Val-186, and 195 to 199 (KMSKS). A 'KMSKS' region motif is present at residues 195 to 199 (KMSKS).

Belongs to the class-I aminoacyl-tRNA synthetase family. In terms of assembly, homodimer.

Its subcellular location is the cytoplasm. It catalyses the reaction tRNA(Trp) + L-tryptophan + ATP = L-tryptophyl-tRNA(Trp) + AMP + diphosphate + H(+). Catalyzes the attachment of tryptophan to tRNA(Trp). This is Tryptophan--tRNA ligase from Escherichia coli O157:H7.